The primary structure comprises 305 residues: Large ribosomal subunit protein uL10 (305 aa).

This sequence belongs to the universal ribosomal protein uL10 family. P0 forms a pentameric complex by interaction with dimers of P1 and P2. Post-translationally, phosphorylated.

Its function is as follows. Ribosomal protein P0 is the functional equivalent of E.coli protein L10. The protein is Large ribosomal subunit protein uL10 (rplp0) of Dictyostelium discoideum (Social amoeba).